Here is a 46-residue protein sequence, read N- to C-terminus: Mu-segestritoxin-Sf1d (46 aa).

Cystine bridges form between cysteine 3-cysteine 19, cysteine 10-cysteine 22, cysteine 18-cysteine 42, and cysteine 24-cysteine 40. Residues arginine 31–tryptophan 33 form a keys region for toxin activity region.

The protein belongs to the neurotoxin 16 (SFI) family. As to expression, expressed by the venom gland.

It is found in the secreted. Insecticidal toxin. It inhibits insect voltage-gated sodium channels (Nav) by partially blocking the channel pore in DUM neurons from the American cockroach, not by acting as a gating modifier. The inhibition is only partially reversible after prolonged washout. In vivo, the toxin causes flaccid paralysis followed by death when injected into Heliothis virescens larvae. It also causes uncoordinated movements followed by full paralysis to sheep blowflies (Lucilia cuprina). When the toxin is fused to snowdrop lectin, it is orally active against larvae of the tomato moth (Laconobia oleracea), the rice brown planthopper (Nilaparvata lugens), and the peach-potato aphid (Myzus persicae). This is Mu-segestritoxin-Sf1d from Segestria florentina (Tube-web spider).